A 412-amino-acid polypeptide reads, in one-letter code: Inactive serine protease 35 (412 aa).

A signal peptide spans 1–23 (MGAMFFGLMLFTLGWTLIDGSES). N-linked (GlcNAc...) asparagine glycosylation occurs at Asn110. In terms of domain architecture, Peptidase S1 spans 124-407 (VYGTDSRFSI…ICLWMHGDDA (284 aa)). A disulfide bridge connects residues Cys154 and Cys170. Over residues 192–207 (RNKGGGKRRRGSRRNR) the composition is skewed to basic residues. The interval 192–246 (RNKGGGKRRRGSRRNRREVSGAGREGSQDSLKETAKAGRRRKGSARRQRAADGRP) is disordered. The span at 217-227 (GSQDSLKETAK) shows a compositional bias: basic and acidic residues. Over residues 228–239 (AGRRRKGSARRQ) the composition is skewed to basic residues.

This sequence belongs to the peptidase S1 family.

The protein resides in the secreted. The polypeptide is Inactive serine protease 35 (PRSS35) (Bos taurus (Bovine)).